Consider the following 253-residue polypeptide: DNA repair protein RecO (253 aa).

Belongs to the RecO family.

In terms of biological role, involved in DNA repair and RecF pathway recombination. The polypeptide is DNA repair protein RecO (Pediococcus pentosaceus (strain ATCC 25745 / CCUG 21536 / LMG 10740 / 183-1w)).